The sequence spans 99 residues: A-type ATP synthase subunit F (99 aa).

Belongs to the V-ATPase F subunit family. Has multiple subunits with at least A(3), B(3), C, D, E, F, H, I and proteolipid K(x).

The protein localises to the cell membrane. Component of the A-type ATP synthase that produces ATP from ADP in the presence of a proton gradient across the membrane. The sequence is that of A-type ATP synthase subunit F from Methanococcus maripaludis (strain C5 / ATCC BAA-1333).